Consider the following 698-residue polypeptide: Polyribonucleotide nucleotidyltransferase (698 aa).

Residues Asp-490 and Asp-496 each contribute to the Mg(2+) site. In terms of domain architecture, KH spans 557 to 616 (PKVVTMTIKPDKIRDVIGPGGKKINEIIDETGVKLDIEQDGTIFIGAVDQAMINRAREII). One can recognise an S1 motif domain in the interval 626 to 694 (GQTYQATVKR…KQGRVNASHR (69 aa)).

Belongs to the polyribonucleotide nucleotidyltransferase family. The cofactor is Mg(2+).

The protein resides in the cytoplasm. It carries out the reaction RNA(n+1) + phosphate = RNA(n) + a ribonucleoside 5'-diphosphate. Involved in mRNA degradation. Catalyzes the phosphorolysis of single-stranded polyribonucleotides processively in the 3'- to 5'-direction. This chain is Polyribonucleotide nucleotidyltransferase, found in Staphylococcus aureus (strain MSSA476).